Consider the following 467-residue polypeptide: ATP-dependent protease ATPase subunit HslU (467 aa).

ATP-binding positions include V20, 62 to 67, D280, E345, and R417; that span reads GVGKTE.

The protein belongs to the ClpX chaperone family. HslU subfamily. A double ring-shaped homohexamer of HslV is capped on each side by a ring-shaped HslU homohexamer. The assembly of the HslU/HslV complex is dependent on binding of ATP.

The protein localises to the cytoplasm. Functionally, ATPase subunit of a proteasome-like degradation complex; this subunit has chaperone activity. The binding of ATP and its subsequent hydrolysis by HslU are essential for unfolding of protein substrates subsequently hydrolyzed by HslV. HslU recognizes the N-terminal part of its protein substrates and unfolds these before they are guided to HslV for hydrolysis. The polypeptide is ATP-dependent protease ATPase subunit HslU (Enterococcus faecalis (strain ATCC 700802 / V583)).